Here is a 110-residue protein sequence, read N- to C-terminus: UPF0060 membrane protein Pfl01_4105 (110 aa).

The next 4 membrane-spanning stretches (helical) occupy residues 5-25 (LWFF…WMWL), 28-48 (GKSA…ALLL), 59-79 (AYAA…AVVE), and 84-104 (LGSD…ILFG).

It belongs to the UPF0060 family.

It localises to the cell inner membrane. The polypeptide is UPF0060 membrane protein Pfl01_4105 (Pseudomonas fluorescens (strain Pf0-1)).